The following is a 166-amino-acid chain: MKKVYHYIIHYVRTYLLLELLAGLWLTVKYFFRKKITVQFPEEQTPLSPRFRGLLALRRYPNGEERCIACKLCEAVCPALAITIESEQRDDGSRRTTRYDIDMFKCINCGLCEESCPVDSIVVTPIHHYHISERGQNIMTKEKLLAVGDLMESQLAADRAADEKYR.

4Fe-4S ferredoxin-type domains lie at 57 to 87 and 97 to 126; these read LRRYPNGEERCIACKLCEAVCPALAITIESE and TRYDIDMFKCINCGLCEESCPVDSIVVTPI. [4Fe-4S] cluster-binding residues include Cys67, Cys70, Cys73, Cys77, Cys106, Cys109, Cys112, and Cys116.

The protein belongs to the complex I 23 kDa subunit family. In terms of assembly, NDH-1 is composed of 14 different subunits. Subunits NuoA, H, J, K, L, M, N constitute the membrane sector of the complex. [4Fe-4S] cluster serves as cofactor.

It localises to the cell inner membrane. The enzyme catalyses a quinone + NADH + 5 H(+)(in) = a quinol + NAD(+) + 4 H(+)(out). NDH-1 shuttles electrons from NADH, via FMN and iron-sulfur (Fe-S) centers, to quinones in the respiratory chain. The immediate electron acceptor for the enzyme in this species is believed to be ubiquinone. Couples the redox reaction to proton translocation (for every two electrons transferred, four hydrogen ions are translocated across the cytoplasmic membrane), and thus conserves the redox energy in a proton gradient. The sequence is that of NADH-quinone oxidoreductase subunit I from Legionella pneumophila (strain Lens).